We begin with the raw amino-acid sequence, 446 residues long: Exodeoxyribonuclease 7 large subunit (446 aa).

This sequence belongs to the XseA family. Heterooligomer composed of large and small subunits.

The protein localises to the cytoplasm. It carries out the reaction Exonucleolytic cleavage in either 5'- to 3'- or 3'- to 5'-direction to yield nucleoside 5'-phosphates.. Functionally, bidirectionally degrades single-stranded DNA into large acid-insoluble oligonucleotides, which are then degraded further into small acid-soluble oligonucleotides. The sequence is that of Exodeoxyribonuclease 7 large subunit from Streptococcus thermophilus (strain CNRZ 1066).